The primary structure comprises 672 residues: Flap endonuclease 1 (672 aa).

An N-domain region spans residues 1–106 (MGIKGLIGFL…QTLAKRKLLR (106 aa)). Aspartate 34 contacts Mg(2+). DNA is bound by residues arginine 47 and arginine 72. Mg(2+)-binding residues include aspartate 88, glutamate 160, glutamate 162, aspartate 181, and aspartate 183. The segment at 124–252 (AIRKYVGRTV…KTAYNLIKKH (129 aa)) is I-domain. Position 160 (glutamate 160) interacts with DNA. DNA is bound by residues glycine 230 and aspartate 232. Aspartate 232 provides a ligand contact to Mg(2+). Residues 327-335 (TQLSLKSFF) are interaction with PCNA. The tract at residues 361-436 (VESAVDSTSD…DAKKRNKRVP (76 aa)) is disordered. Positions 370–382 (DDGKDEVPSDDKV) are enriched in basic and acidic residues.

It belongs to the XPG/RAD2 endonuclease family. FEN1 subfamily. Interacts with PCNA. Three molecules of FEN1 bind to one PCNA trimer with each molecule binding to one PCNA monomer. PCNA stimulates the nuclease activity without altering cleavage specificity. Requires Mg(2+) as cofactor. Phosphorylated. Phosphorylation upon DNA damage induces relocalization to the nuclear plasma.

Its subcellular location is the nucleus. The protein localises to the nucleolus. It localises to the nucleoplasm. The protein resides in the mitochondrion. Functionally, structure-specific nuclease with 5'-flap endonuclease and 5'-3' exonuclease activities involved in DNA replication and repair. During DNA replication, cleaves the 5'-overhanging flap structure that is generated by displacement synthesis when DNA polymerase encounters the 5'-end of a downstream Okazaki fragment. It enters the flap from the 5'-end and then tracks to cleave the flap base, leaving a nick for ligation. Also involved in the long patch base excision repair (LP-BER) pathway, by cleaving within the apurinic/apyrimidinic (AP) site-terminated flap. Acts as a genome stabilization factor that prevents flaps from equilibrating into structures that lead to duplications and deletions. Also possesses 5'-3' exonuclease activity on nicked or gapped double-stranded DNA, and exhibits RNase H activity. Also involved in replication and repair of rDNA and in repairing mitochondrial DNA. This chain is Flap endonuclease 1, found in Babesia bovis.